Reading from the N-terminus, the 204-residue chain is MIRFVLDTSIFVNPDVRKKFGETPTKAMKTFLKYAESLFGHVEFYMPPGIYREVMHFVEEEEVSPDIELYIIKKPPNVHDIKIPAFVVYELIEDIRRRVDKGLRVAEKAVRESVIDTSNVDKIIQKLRRNYRKALREGILDSKEDFELILLAKELDGIIVSADVGILTWAEKMGIKWVDAFKFKEVLEELVEKLKRSESEKERK.

The protein belongs to the HARP family.

It catalyses the reaction Endonucleolytic cleavage of RNA, removing 5'-extranucleotides from tRNA precursor.. Functionally, RNA-free RNase P that catalyzes the removal of the 5'-leader sequence from pre-tRNA to produce the mature 5'-terminus. The sequence is that of RNA-free ribonuclease P from Pyrococcus abyssi (strain GE5 / Orsay).